The following is a 634-amino-acid chain: E3 ubiquitin/ISG15 ligase TRIM25 (634 aa).

Residues 13–54 (CSVCLELFKEPVTTPCGHNFCMSCLDETWVVQGPPYRCPQCR) form an RING-type zinc finger. T90 carries the post-translational modification Phosphothreonine. S99 is subject to Phosphoserine. K116 participates in a covalent cross-link: Glycyl lysine isopeptide (Lys-Gly) (interchain with G-Cter in ISG15). The stretch at 215-305 (ATKALEDVRS…LIMDKGDEFE (91 aa)) forms a coiled coil. An N6-acetyllysine modification is found at K272. At Y277 the chain carries Phosphotyrosine. The interval 353–437 (KLQKKSEEHN…APKASAAQPD (85 aa)) is disordered. A compositionally biased stretch (polar residues) spans 363 to 376 (GSGNKGDQTQSTFK). A B30.2/SPRY domain is found at 444–634 (KVLENFLTKS…AGTTLSICSK (191 aa)). K572 bears the N6-acetyllysine mark.

Forms homodimers. Interacts (via SPRY domain) with RIGI (via CARD domain). Interacts with ZFHX3. Interacts with NLRP12; this interaction reduces the E3 ubiquitin ligase TRIM25-mediated 'Lys-63'-linked RIGI activation. Interacts with the KHDC3L/FILIA-OOEP/FLOPED scaffold complex and BLM at DNA replication forks. Interacts with RTN3; this interaction prevents RIGI ubiquitination. Interacts with YWHAE. Auto-ISGylated. Ubiquitous.

It is found in the cytoplasm. Its subcellular location is the stress granule. The protein resides in the nucleus. It catalyses the reaction S-ubiquitinyl-[E2 ubiquitin-conjugating enzyme]-L-cysteine + [acceptor protein]-L-lysine = [E2 ubiquitin-conjugating enzyme]-L-cysteine + N(6)-ubiquitinyl-[acceptor protein]-L-lysine.. The catalysed reaction is ATP + [ISG15] + [protein]-lysine = AMP + diphosphate + [protein]-N-ISGyllysine.. The protein operates within protein modification; protein ubiquitination. In terms of biological role, functions as a ubiquitin E3 ligase and as an ISG15 E3 ligase. Involved in innate immune defense against viruses by mediating ubiquitination of RIGI and IFIH1. Mediates 'Lys-63'-linked polyubiquitination of the RIGI N-terminal CARD-like region and may play a role in signal transduction that leads to the production of interferons in response to viral infection. Mediates 'Lys-63'-linked polyubiquitination of IFIH1. Promotes ISGylation of 14-3-3 sigma (SFN), an adapter protein implicated in the regulation of a large spectrum signaling pathway. Mediates estrogen action in various target organs. Mediates the ubiquitination and subsequent proteasomal degradation of ZFHX3. Plays a role in promoting the restart of stalled replication forks via interaction with the KHDC3L-OOEP scaffold and subsequent ubiquitination of BLM, resulting in the recruitment and retainment of BLM at DNA replication forks. Plays an essential role in the antiviral activity of ZAP/ZC3HAV1; an antiviral protein which inhibits the replication of certain viruses. Mechanistically, mediates 'Lys-63'-linked polyubiquitination of ZAP/ZC3HAV1 that is required for its optimal binding to target mRNA. Also mediates the ubiquitination of various substrates implicated in stress granule formation, nonsense-mediated mRNA decay, nucleoside synthesis and mRNA translation and stability. This Mus musculus (Mouse) protein is E3 ubiquitin/ISG15 ligase TRIM25 (Trim25).